Reading from the N-terminus, the 120-residue chain is Large ribosomal subunit protein bL20 (120 aa).

It belongs to the bacterial ribosomal protein bL20 family.

Its function is as follows. Binds directly to 23S ribosomal RNA and is necessary for the in vitro assembly process of the 50S ribosomal subunit. It is not involved in the protein synthesizing functions of that subunit. The sequence is that of Large ribosomal subunit protein bL20 from Baumannia cicadellinicola subsp. Homalodisca coagulata.